Here is a 310-residue protein sequence, read N- to C-terminus: Serine/threonine-protein kinase pim-2 (310 aa).

Residues 30–290 (YTMGNLLGSG…LEQILQHPWM (261 aa)) form the Protein kinase domain. Residues 36 to 44 (LGSGGFGSV) and lysine 59 each bind ATP. The active-site Proton acceptor is aspartate 167.

This sequence belongs to the protein kinase superfamily. CAMK Ser/Thr protein kinase family. PIM subfamily. Post-translationally, autophosphorylated.

The enzyme catalyses L-seryl-[protein] + ATP = O-phospho-L-seryl-[protein] + ADP + H(+). It catalyses the reaction L-threonyl-[protein] + ATP = O-phospho-L-threonyl-[protein] + ADP + H(+). Proto-oncogene with serine/threonine kinase activity involved in cell survival and cell proliferation. The chain is Serine/threonine-protein kinase pim-2 (pim2) from Danio rerio (Zebrafish).